Here is a 173-residue protein sequence, read N- to C-terminus: Lipoprotein signal peptidase (173 aa).

4 helical membrane passes run leucine 14–phenylalanine 34, isoleucine 44–serine 64, tryptophan 72–leucine 92, and aspartate 98–tyrosine 118. Catalysis depends on residues aspartate 128 and aspartate 147. Residues tyrosine 139–leucine 159 form a helical membrane-spanning segment.

The protein belongs to the peptidase A8 family.

Its subcellular location is the cell inner membrane. The enzyme catalyses Release of signal peptides from bacterial membrane prolipoproteins. Hydrolyzes -Xaa-Yaa-Zaa-|-(S,diacylglyceryl)Cys-, in which Xaa is hydrophobic (preferably Leu), and Yaa (Ala or Ser) and Zaa (Gly or Ala) have small, neutral side chains.. It functions in the pathway protein modification; lipoprotein biosynthesis (signal peptide cleavage). Functionally, this protein specifically catalyzes the removal of signal peptides from prolipoproteins. The protein is Lipoprotein signal peptidase of Pseudomonas syringae pv. tomato (strain ATCC BAA-871 / DC3000).